The primary structure comprises 290 residues: 4-hydroxy-tetrahydrodipicolinate synthase (290 aa).

Position 48 (Thr-48) interacts with pyruvate. Residue Tyr-137 is the Proton donor/acceptor of the active site. Lys-165 serves as the catalytic Schiff-base intermediate with substrate. Ile-206 contributes to the pyruvate binding site.

This sequence belongs to the DapA family. As to quaternary structure, homotetramer; dimer of dimers.

The protein localises to the cytoplasm. The enzyme catalyses L-aspartate 4-semialdehyde + pyruvate = (2S,4S)-4-hydroxy-2,3,4,5-tetrahydrodipicolinate + H2O + H(+). Its pathway is amino-acid biosynthesis; L-lysine biosynthesis via DAP pathway; (S)-tetrahydrodipicolinate from L-aspartate: step 3/4. Catalyzes the condensation of (S)-aspartate-beta-semialdehyde [(S)-ASA] and pyruvate to 4-hydroxy-tetrahydrodipicolinate (HTPA). The polypeptide is 4-hydroxy-tetrahydrodipicolinate synthase (Ligilactobacillus salivarius (strain UCC118) (Lactobacillus salivarius)).